A 476-amino-acid chain; its full sequence is S-adenosylmethionine-dependent nucleotide dehydratase (476 aa).

The cytidylate kinase-like domain stretch occupies residues 1 to 168 (MKTKITLSGF…LTANEVADLI (168 aa)). 9-17 (GFAGTGKST) contacts ATP. Positions 176 to 400 (NAVSKIPSVN…HKDVETIVPE (225 aa)) constitute a Radical SAM core domain. The interval 183-476 (SVNFHLWQPC…DLRKEEVSYE (294 aa)) is prokaryotic viperin domain. Positions 192, 196, and 199 each coordinate [4Fe-4S] cluster.

In the N-terminal section; belongs to the cytidylate kinase-like family. It in the C-terminal section; belongs to the radical SAM superfamily. Viperin family. It depends on [4Fe-4S] cluster as a cofactor.

It catalyses the reaction GTP + AH2 + S-adenosyl-L-methionine = 3'-deoxy-3',4'-didehydro-GTP + 5'-deoxyadenosine + L-methionine + A + H2O + H(+). In terms of biological role, expression of pVip60 in E.coli (strain MG1655) confers resistance to phage T7; prevents culture collapse upon infection. Catalyzes the conversion of guanosine triphosphate (GTP) to 3'-deoxy-3',4'-didehydro-GTP (ddhGTP), probably via a SAM-dependent radical mechanism. The modified nucleotide represses transcription from T7 RNA polymerase-directed genes (possibly by acting as chain terminators), strongly suggesting these nucleotides block viral polymerase transcription. The N-terminus of the protein may generate NTP for use by the viperin domain. The sequence is that of S-adenosylmethionine-dependent nucleotide dehydratase from Lacinutrix mariniflava (strain JCM 13824 / KCCM 42306 / AKS432).